The primary structure comprises 778 residues: Putative ATP-dependent RNA helicase MJ1505 (778 aa).

Residues 22 to 186 (IAANALKKKT…EICENLGIEH (165 aa)) form the Helicase ATP-binding domain. ATP is bound at residue 35 to 42 (LSTGLGKT). The short motif at 137–140 (DEAH) is the DEAH box element. Residues 338–516 (KVVDMVKNIL…EIKEETEEIK (179 aa)) form the Helicase C-terminal domain.

The protein belongs to the DEAD box helicase family. DEAH subfamily.

It catalyses the reaction ATP + H2O = ADP + phosphate + H(+). In Methanocaldococcus jannaschii (strain ATCC 43067 / DSM 2661 / JAL-1 / JCM 10045 / NBRC 100440) (Methanococcus jannaschii), this protein is Putative ATP-dependent RNA helicase MJ1505.